Here is a 979-residue protein sequence, read N- to C-terminus: MALFAVFQTTFFLTLLSLRTYQSEVLAERLPLTPVSLKVSTNSTRQSLHLQWTVHNLPYHQELKMVFQIQISRIETSNVIWVGNYSTTVKWNQVLHWSWESELPLECATHFVRIKSLVDDAKFPEPNFWSNWSSWEEVSVQDSTGQDILFVFPKDKLVEEGTNVTICYVSRNIQNNVSCYLEGKQIHGEQLDPHVTAFNLNSVPFIRNKGTNIYCEASQGNVSEGMKGIVLFVSKVLEEPKDFSCETEDFKTLHCTWDPGTDTALGWSKQPSQSYTLFESFSGEKKLCTHKNWCNWQITQDSQETYNFTLIAENYLRKRSVNILFNLTHRVYLMNPFSVNFENVNATNAIMTWKVHSIRNNFTYLCQIELHGEGKMMQYNVSIKVNGEYFLSELEPATEYMARVRCADASHFWKWSEWSGQNFTTLEAAPSEAPDVWRIVSLEPGNHTVTLFWKPLSKLHANGKILFYNVVVENLDKPSSSELHSIPAPANSTKLILDRCSYQICVIANNSVGASPASVIVISADPENKEVEEERIAGTEGGFSLSWKPQPGDVIGYVVDWCDHTQDVLGDFQWKNVGPNTTSTVISTDAFRPGVRYDFRIYGLSTKRIACLLEKKTGYSQELAPSDNPHVLVDTLTSHSFTLSWKDYSTESQPGFIQGYHVYLKSKARQCHPRFEKAVLSDGSECCKYKIDNPEEKALIVDNLKPESFYEFFITPFTSAGEGPSATFTKVTTPDEHSSMLIHILLPMVFCVLLIMVMCYLKSQWIKETCYPDIPDPYKSSILSLIKFKENPHLIIMNVSDCIPDAIEVVSKPEGTKIQFLGTRKSLTETELTKPNYLYLLPTEKNHSGPGPCICFENLTYNQAASDSGSCGHVPVSPKAPSMLGLMTSPENVLKALEKNYMNSLGEIPAGETSLNYVSQLASPMFGDKDSLPTNPVEAPHCSEYKMQMAVSLRLALPPPTENSSLSSITLLDPGEHYC.

An N-terminal signal peptide occupies residues 1–27; it reads MALFAVFQTTFFLTLLSLRTYQSEVLA. Residues 28-740 are Extracellular-facing; that stretch reads ERLPLTPVSL…VTTPDEHSSM (713 aa). N-linked (GlcNAc...) asparagine glycosylation is present at N163. C245 and C255 are joined by a disulfide. N326 and N380 each carry an N-linked (GlcNAc...) asparagine glycan. 4 consecutive Fibronectin type-III domains span residues 335–428, 433–528, 529–623, and 625–736; these read NPFS…TLEA, APDV…DPEN, KEVE…SQEL, and PSDN…TPDE. The short motif at 415 to 419 is the WSXWS motif element; sequence WSEWS. N-linked (GlcNAc...) asparagine glycosylation is found at N446 and N580. Residues 741 to 761 form a helical membrane-spanning segment; sequence LIHILLPMVFCVLLIMVMCYL. The Cytoplasmic portion of the chain corresponds to 762–979; sequence KSQWIKETCY…TLLDPGEHYC (218 aa). Positions 770-778 match the Box 1 motif motif; the sequence is CYPDIPDPY. Residues S826 and S889 each carry the phosphoserine modification.

The protein belongs to the type I cytokine receptor family. Type 2 subfamily. Heterodimer composed of OSMR and IL6ST (type II OSM receptor). Heterodimer with IL31RA to form the IL31 receptor. Expressed in keratinocytes (at protein level). Expressed at relatively high levels in all neural cells as well as fibroblast and epithelial cells.

The protein localises to the membrane. In terms of biological role, associates with IL31RA to form the IL31 receptor. Binds IL31 to activate STAT3 and possibly STAT1 and STAT5. Capable of transducing OSM-specific signaling events. The chain is Oncostatin-M-specific receptor subunit beta (OSMR) from Homo sapiens (Human).